The following is a 233-amino-acid chain: Large ribosomal subunit protein uL1 (233 aa).

It belongs to the universal ribosomal protein uL1 family. As to quaternary structure, part of the 50S ribosomal subunit.

In terms of biological role, binds directly to 23S rRNA. The L1 stalk is quite mobile in the ribosome, and is involved in E site tRNA release. Protein L1 is also a translational repressor protein, it controls the translation of the L11 operon by binding to its mRNA. The chain is Large ribosomal subunit protein uL1 from Trichlorobacter lovleyi (strain ATCC BAA-1151 / DSM 17278 / SZ) (Geobacter lovleyi).